A 111-amino-acid chain; its full sequence is Ig kappa chain V-III region PC 3741/TEPC 111 (111 aa).

Positions 1–23 (DIVLTQSPASLAVSLGQRATISC) are framework-1. Residues cysteine 23 and cysteine 92 are joined by a disulfide bond. The segment at 24–38 (RASESVDSYGNSFMH) is complementarity-determining-1. Positions 39–53 (WYQQKPGQPPKLLIY) are framework-2. The segment at 54–60 (RASNLES) is complementarity-determining-2. Residues 61 to 92 (GIPARFSGSGSRTDFTLTINPVEADDVATYYC) are framework-3. Positions 93–101 (QQSNEDPYT) are complementarity-determining-3. Residues 102–111 (FGGGTKLEIK) form a framework-4 region.

In Mus musculus (Mouse), this protein is Ig kappa chain V-III region PC 3741/TEPC 111.